The primary structure comprises 362 residues: Peptide chain release factor 1 (362 aa).

Residue Gln-240 is modified to N5-methylglutamine.

It belongs to the prokaryotic/mitochondrial release factor family. In terms of processing, methylated by PrmC. Methylation increases the termination efficiency of RF1.

It is found in the cytoplasm. Its function is as follows. Peptide chain release factor 1 directs the termination of translation in response to the peptide chain termination codons UAG and UAA. The chain is Peptide chain release factor 1 from Bifidobacterium longum (strain DJO10A).